The following is a 149-amino-acid chain: Large ribosomal subunit protein uL16 (149 aa).

This sequence belongs to the universal ribosomal protein uL16 family. In terms of assembly, part of the 50S ribosomal subunit.

Its function is as follows. Binds 23S rRNA and is also seen to make contacts with the A and possibly P site tRNAs. This Dehalococcoides mccartyi (strain ATCC BAA-2100 / JCM 16839 / KCTC 5957 / BAV1) protein is Large ribosomal subunit protein uL16.